The primary structure comprises 370 residues: Histidinol-phosphate aminotransferase 1 (370 aa).

The residue at position 222 (Lys222) is an N6-(pyridoxal phosphate)lysine.

This sequence belongs to the class-II pyridoxal-phosphate-dependent aminotransferase family. Histidinol-phosphate aminotransferase subfamily. As to quaternary structure, homodimer. Pyridoxal 5'-phosphate serves as cofactor.

The catalysed reaction is L-histidinol phosphate + 2-oxoglutarate = 3-(imidazol-4-yl)-2-oxopropyl phosphate + L-glutamate. It participates in amino-acid biosynthesis; L-histidine biosynthesis; L-histidine from 5-phospho-alpha-D-ribose 1-diphosphate: step 7/9. This Bacillus anthracis protein is Histidinol-phosphate aminotransferase 1 (hisC1).